We begin with the raw amino-acid sequence, 187 residues long: Benzene 1,2-dioxygenase subunit beta (187 aa).

The protein belongs to the bacterial ring-hydroxylating dioxygenase beta subunit family. In terms of assembly, this dioxygenase system consists of four proteins: the two subunits of the hydroxylase component (BnzA and BnzB), a ferredoxin (BnzC) and a ferredoxin reductase (BnzD). [2Fe-2S] cluster serves as cofactor. Fe cation is required as a cofactor.

The enzyme catalyses benzene + NADH + O2 + H(+) = cis-1,2-dihydrobenzene-1,2-diol + NAD(+). It carries out the reaction toluene + NADH + O2 + H(+) = (1S,2R)-3-methylcyclohexa-3,5-diene-1,2-diol + NAD(+). The protein operates within aromatic compound metabolism; benzene degradation; catechol from benzene: step 1/2. It participates in xenobiotic degradation; toluene degradation. It functions in the pathway xenobiotic degradation; xylene degradation. Catalyzes both the oxidation of benzene and toluene. The beta subunit may be responsible for the substrate specificity of the enzyme. This chain is Benzene 1,2-dioxygenase subunit beta (bnzB), found in Pseudomonas putida (strain ATCC 700007 / DSM 6899 / JCM 31910 / BCRC 17059 / LMG 24140 / F1).